Consider the following 175-residue polypeptide: Myosin regulatory light chain 2, atrial isoform (175 aa).

Alanine 2 is modified (N-acetylalanine). Phosphoserine is present on residues serine 22 and serine 23. 3 EF-hand domains span residues 32–67, 102–137, and 138–173; these read AQIQ…LGKV, DPEE…QADK, and FSPA…GDEK. 4 residues coordinate Ca(2+): aspartate 45, asparagine 47, aspartate 49, and aspartate 56.

Myosin is a hexamer of 2 heavy chains and 4 light chains. In terms of tissue distribution, predominantly expressed in adult atrial muscle.

The chain is Myosin regulatory light chain 2, atrial isoform (MYL7) from Homo sapiens (Human).